Reading from the N-terminus, the 360-residue chain is Vignain (360 aa).

The signal sequence occupies residues 1–20; the sequence is MQKFILLALSLALVLAITES. Positions 21-124 are cleaved as a propeptide — activation peptide; the sequence is FDFHEKELES…NGTFMYEKVD (104 aa). Asn115 is a glycosylation site (N-linked (GlcNAc...) asparagine). 3 cysteine pairs are disulfide-bonded: Cys147–Cys189, Cys181–Cys222, and Cys280–Cys332. Cys150 is an active-site residue. Active-site residues include His286 and Asn307. The interval 341-360 is disordered; the sequence is PIKKSSNNPSGIKSSPKDEL. A compositionally biased stretch (polar residues) spans 344–353; the sequence is KSSNNPSGIK. Positions 354–360 are cleaved as a propeptide — removed in mature form; that stretch reads SSPKDEL. Residues 357–360 form a prevents secretion from ER region; it reads KDEL.

It belongs to the peptidase C1 family. The potential N-glycosylation site at Asn-115 is not glycosylated.

It localises to the cytoplasmic vesicle. Its activity is regulated as follows. Low pH triggers activation of the protease and removal of the propeptide and the KDEL motif. Its function is as follows. Involved in programmed cell death. Shows a pronounced preference for hydrophobic residues in the P2 position and no obvious preference in the P1 position of the cleavage site. Accepts proline at the P1 and P1' positions. This Ricinus communis (Castor bean) protein is Vignain (CYSEP).